The primary structure comprises 227 residues: Cytochrome c oxidase subunit 2 (227 aa).

The Mitochondrial intermembrane segment spans residues 1 to 14 (MAYPFELGFQDATS). Residues 15-45 (PIMEELLHFHDHTLMIVFLISSLVLYIISLM) form a helical membrane-spanning segment. The Mitochondrial matrix segment spans residues 46 to 59 (LTTKLTHTSTMDAQ). A helical membrane pass occupies residues 60-87 (EVETIWTILPAIILILIALPSLRVLYMM). Residues 88-227 (DEINDPSLTV…HFENWSSSML (140 aa)) lie on the Mitochondrial intermembrane side of the membrane. Residues histidine 161, cysteine 196, glutamate 198, cysteine 200, histidine 204, and methionine 207 each coordinate Cu cation. Glutamate 198 serves as a coordination point for Mg(2+).

Belongs to the cytochrome c oxidase subunit 2 family. Component of the cytochrome c oxidase (complex IV, CIV), a multisubunit enzyme composed of 14 subunits. The complex is composed of a catalytic core of 3 subunits MT-CO1, MT-CO2 and MT-CO3, encoded in the mitochondrial DNA, and 11 supernumerary subunits COX4I, COX5A, COX5B, COX6A, COX6B, COX6C, COX7A, COX7B, COX7C, COX8 and NDUFA4, which are encoded in the nuclear genome. The complex exists as a monomer or a dimer and forms supercomplexes (SCs) in the inner mitochondrial membrane with NADH-ubiquinone oxidoreductase (complex I, CI) and ubiquinol-cytochrome c oxidoreductase (cytochrome b-c1 complex, complex III, CIII), resulting in different assemblies (supercomplex SCI(1)III(2)IV(1) and megacomplex MCI(2)III(2)IV(2)). Found in a complex with TMEM177, COA6, COX18, COX20, SCO1 and SCO2. Interacts with TMEM177 in a COX20-dependent manner. Interacts with COX20. Interacts with COX16. The cofactor is Cu cation.

It is found in the mitochondrion inner membrane. It carries out the reaction 4 Fe(II)-[cytochrome c] + O2 + 8 H(+)(in) = 4 Fe(III)-[cytochrome c] + 2 H2O + 4 H(+)(out). Functionally, component of the cytochrome c oxidase, the last enzyme in the mitochondrial electron transport chain which drives oxidative phosphorylation. The respiratory chain contains 3 multisubunit complexes succinate dehydrogenase (complex II, CII), ubiquinol-cytochrome c oxidoreductase (cytochrome b-c1 complex, complex III, CIII) and cytochrome c oxidase (complex IV, CIV), that cooperate to transfer electrons derived from NADH and succinate to molecular oxygen, creating an electrochemical gradient over the inner membrane that drives transmembrane transport and the ATP synthase. Cytochrome c oxidase is the component of the respiratory chain that catalyzes the reduction of oxygen to water. Electrons originating from reduced cytochrome c in the intermembrane space (IMS) are transferred via the dinuclear copper A center (CU(A)) of subunit 2 and heme A of subunit 1 to the active site in subunit 1, a binuclear center (BNC) formed by heme A3 and copper B (CU(B)). The BNC reduces molecular oxygen to 2 water molecules using 4 electrons from cytochrome c in the IMS and 4 protons from the mitochondrial matrix. The chain is Cytochrome c oxidase subunit 2 (MT-CO2) from Sciurus carolinensis (Eastern gray squirrel).